The primary structure comprises 381 residues: 3-hydroxyisobutyryl-CoA hydrolase, mitochondrial (381 aa).

The transit peptide at 1–25 (MDRLLTISNHIGKNIRQFSTSTEEV) directs the protein to the mitochondrion. Substrate-binding residues include glutamate 116, glycine 141, glutamate 164, and aspartate 172.

The protein belongs to the enoyl-CoA hydratase/isomerase family.

The protein localises to the mitochondrion. It carries out the reaction 3-hydroxy-2-methylpropanoyl-CoA + H2O = 3-hydroxy-2-methylpropanoate + CoA + H(+). It participates in amino-acid degradation; L-valine degradation. Hydrolyzes 3-hydroxyisobutyryl-CoA (HIBYL-CoA), a saline catabolite. This Dictyostelium discoideum (Social amoeba) protein is 3-hydroxyisobutyryl-CoA hydrolase, mitochondrial (hibch).